The following is a 277-amino-acid chain: MSQGYLNFPHIDPVLIEIGPLAVRWYGLMYLFGFMFALWLANKRADKPNSGWTRDQVSDLLFAGFLGVVIGGRVGYVLFYNFGYFLDNPLYLFEVWTGGMSFHGGLLGVISAMLWYGYKNNRSFFTIADFVAPLVPFGLGAGRLGNFMNGELWGRVTDVPWAMVFPTGGPFPRHPSQLYEFALEGVVLFLILNWFIRKPRPLGTVSGLFLFGYGTFRFLVEYVRQPDAQLGLFGDWISMGQILSLPMVIGGLLMMLWAFKRNLYPSIEQPQSTTKKK.

Transmembrane regions (helical) follow at residues 21-41 (LAVR…LWLA), 60-80 (LLFA…VLFY), 95-115 (VWTG…AMLW), 124-144 (FFTI…AGRL), 176-196 (SQLY…NWFI), 203-223 (GTVS…VEYV), and 239-259 (MGQI…LWAF). Position 143 (Arg-143) interacts with a 1,2-diacyl-sn-glycero-3-phospho-(1'-sn-glycerol).

This sequence belongs to the Lgt family.

It is found in the cell inner membrane. The enzyme catalyses L-cysteinyl-[prolipoprotein] + a 1,2-diacyl-sn-glycero-3-phospho-(1'-sn-glycerol) = an S-1,2-diacyl-sn-glyceryl-L-cysteinyl-[prolipoprotein] + sn-glycerol 1-phosphate + H(+). It functions in the pathway protein modification; lipoprotein biosynthesis (diacylglyceryl transfer). Its function is as follows. Catalyzes the transfer of the diacylglyceryl group from phosphatidylglycerol to the sulfhydryl group of the N-terminal cysteine of a prolipoprotein, the first step in the formation of mature lipoproteins. The chain is Phosphatidylglycerol--prolipoprotein diacylglyceryl transferase from Aliivibrio fischeri (strain ATCC 700601 / ES114) (Vibrio fischeri).